A 191-amino-acid chain; its full sequence is Ribonuclease HII (191 aa).

An RNase H type-2 domain is found at 4 to 191 (YTAAGLDEVG…HRKTFLSKIQ (188 aa)). Residues Asp10, Glu11, and Asp106 each contribute to the a divalent metal cation site.

This sequence belongs to the RNase HII family. Mn(2+) is required as a cofactor. Requires Mg(2+) as cofactor.

The protein resides in the cytoplasm. The catalysed reaction is Endonucleolytic cleavage to 5'-phosphomonoester.. Functionally, endonuclease that specifically degrades the RNA of RNA-DNA hybrids. The polypeptide is Ribonuclease HII (Prochlorococcus marinus (strain SARG / CCMP1375 / SS120)).